The primary structure comprises 1243 residues: MGDMTNSDFYSKNQRNESSHGGEFGCSMEELRSLMELRGTEAVVKIKETYGDTESICRRLKTSPVEGLPGTAPDLEKRKQIFGQNFIPPKKPKTFLQLVWEALQDVTLIILEIAAIISLGLSFYHPPGESNEGCATAQGGAEDEGEAEAGWIEGAAILLSVICVVLVTAFNDWSKEKQFRGLQSRIEQEQKFTVVRAGQVVQIPVAEIVVGDIAQIKYGDLLPADGLFIQGNDLKIDESSLTGESDQVRKSVDKDPMLLSGTHVMEGSGRMVVTAVGVNSQTGIIFTLLGAGGEEEEKKDKKGVKKGDGLQLPAADGAAPANAAGSANASLVNGKMQDGSADSSQSKAKQQDGAAAMEMQPLKSAEGGDADDKKKANMHKKEKSVLQGKLTKLAVQIGKAGLVMSAITVIILVLYFTVDTFVVNKKPWLTECTPVYVQYFVKFFIIGVTVLVVAVPEGLPLAVTISLAYSVKKMMKDNNLVRHLDACETMGNATAICSDKTGTLTTNRMTVVQAYVGDVHYKEIPDPSSINAKTLELLVNAIAINSAYTTKILPPEKEGALPRQVGNKTECGLLGFVLDLRQDYEPVRSQMPEEKLYKVYTFNSVRKSMSTVIKMPDESFRMYSKGASEIVLKKCCKILSGAGEPRVFRPRDRDEMVKKVIEPMACDGLRTICVAYRDFPSSPEPDWDNENDILNELTCICVVGIEDPVRPEVPEAIRKCQRAGITVRMVTGDNINTARAIAIKCGIIHPGEDFLCLEGKEFNRRIRNEKGEIEQERIDKIWPKLRVLARSSPTDKHTLVKGIIDSTHTEQRQVVAVTGDGTNDGPALKKADVGFAMGIAGTDVAKEASDIILTDDNFSSIVKAVMWGRNVYDSISKFLQFQLTVNVVAVIVAFTGACITQDSPLKAVQMLWVNLIMDTFASLALATEPPTETLLLRKPYGRNKPLISRTMMKNILGHAVYQLTLIFTLLFVGEKMFQIDSGRNAPLHSPPSEHYTIIFNTFVMMQLFNEINARKIHGERNVFDGIFRNPIFCTIVLGTFAIQIVIVQFGGKPFSCSPLQLDQWMWCIFIGLGELVWGQVIATIPTSRLKFLKEAGRLTQKEEIPEEELNEDVEEIDHAERELRRGQILWFRGLNRIQTQIRVVKAFRSSLYEGLEKPESRTSIHNFMAHPEFRIEDSQPHIPLIDDTDLEEDAALKQNSSPPSSLNKNNSAIDSGINLTTDTSKSATSSSPGSPIHSLETSL.

A compositionally biased stretch (polar residues) spans 1 to 13; that stretch reads MGDMTNSDFYSKN. The interval 1-24 is disordered; it reads MGDMTNSDFYSKNQRNESSHGGEF. Residues 1–94 lie on the Cytoplasmic side of the membrane; sequence MGDMTNSDFY…NFIPPKKPKT (94 aa). Phosphoserine is present on residues Ser-18 and Ser-27. The chain crosses the membrane as a helical span at residues 95–115; that stretch reads FLQLVWEALQDVTLIILEIAA. Topologically, residues 116-152 are extracellular; it reads IISLGLSFYHPPGESNEGCATAQGGAEDEGEAEAGWI. The chain crosses the membrane as a helical span at residues 153-173; that stretch reads EGAAILLSVICVVLVTAFNDW. The Cytoplasmic segment spans residues 174 to 390; sequence SKEKQFRGLQ…KEKSVLQGKL (217 aa). The span at 296 to 308 shows a compositional bias: basic and acidic residues; the sequence is EEKKDKKGVKKGD. The segment at 296-382 is disordered; it reads EEKKDKKGVK…KKKANMHKKE (87 aa). Composition is skewed to low complexity over residues 313–330 and 337–356; these read PAAD…ANAS and QDGS…GAAA. The helical transmembrane segment at 391–410 threads the bilayer; it reads TKLAVQIGKAGLVMSAITVI. Over 411–443 the chain is Extracellular; it reads ILVLYFTVDTFVVNKKPWLTECTPVYVQYFVKF. The chain crosses the membrane as a helical span at residues 444–461; sequence FIIGVTVLVVAVPEGLPL. Over 462 to 875 the chain is Cytoplasmic; the sequence is AVTISLAYSV…MWGRNVYDSI (414 aa). The 4-aspartylphosphate intermediate role is filled by Asp-499. Positions 820 and 824 each coordinate Mg(2+). A helical transmembrane segment spans residues 876 to 895; sequence SKFLQFQLTVNVVAVIVAFT. The Extracellular portion of the chain corresponds to 896 to 905; sequence GACITQDSPL. Residues 906 to 926 traverse the membrane as a helical segment; the sequence is KAVQMLWVNLIMDTFASLALA. Topologically, residues 927–946 are cytoplasmic; sequence TEPPTETLLLRKPYGRNKPL. A helical transmembrane segment spans residues 947-969; sequence ISRTMMKNILGHAVYQLTLIFTL. Residues 970 to 987 are Extracellular-facing; sequence LFVGEKMFQIDSGRNAPL. The helical transmembrane segment at 988–1009 threads the bilayer; that stretch reads HSPPSEHYTIIFNTFVMMQLFN. Residues 1010-1028 are Cytoplasmic-facing; the sequence is EINARKIHGERNVFDGIFR. The helical transmembrane segment at 1029 to 1050 threads the bilayer; it reads NPIFCTIVLGTFAIQIVIVQFG. Residues 1051–1060 lie on the Extracellular side of the membrane; it reads GKPFSCSPLQ. Residues 1061 to 1082 form a helical membrane-spanning segment; that stretch reads LDQWMWCIFIGLGELVWGQVIA. The Cytoplasmic portion of the chain corresponds to 1083 to 1243; it reads TIPTSRLKFL…SPIHSLETSL (161 aa). 7 positions are modified to phosphoserine: Glu-1107, Ile-1116, Asp-1117, Arg-1121, Trp-1130, Phe-1131, and Gln-1138. The calmodulin-binding subdomain A stretch occupies residues 1123-1140; sequence LRRGQILWFRGLNRIQTQ. Position 1139 is a phosphothreonine; by PKC (Thr-1139). The segment at 1141-1150 is calmodulin-binding subdomain B; that stretch reads IRVVKAFRSS. A phosphoserine mark is found at Val-1144, Phe-1147, Arg-1148, Tyr-1152, Arg-1161, Thr-1162, Ile-1175, and Ser-1178. Thr-1188 carries the post-translational modification Phosphothreonine. The interval 1194–1243 is disordered; that stretch reads AALKQNSSPPSSLNKNNSAIDSGINLTTDTSKSATSSSPGSPIHSLETSL. 2 stretches are compositionally biased toward low complexity: residues 1196–1211 and 1220–1234; these read LKQN…KNNS and TTDT…SPGS. At Ser-1201 the chain carries Phosphoserine; by PKA. Ser-1211 carries the phosphoserine modification.

It belongs to the cation transport ATPase (P-type) (TC 3.A.3) family. Type IIB subfamily. Interacts with PDZD11. Isoforms containing segment B are found in brain, uterus, liver and kidney and in low levels in other tissues. Isoforms containing segment W are found in kidney, uterus, and pancreas. Isoforms containing segment Y are found in pancreas and in low levels in brain and heart. Isoforms containing segment Z are found in brain and heart and isoforms containing segment X are found in low levels in brain. Isoforms containing segment A are found in low levels in heart and small intestine while isoforms containing segment C are found in testis and in low levels in other tissues.

The protein localises to the cell membrane. Its subcellular location is the synapse. It localises to the apical cell membrane. The protein resides in the basolateral cell membrane. It carries out the reaction Ca(2+)(in) + ATP + H2O = Ca(2+)(out) + ADP + phosphate + H(+). ATP-driven Ca(2+) ion pump involved in the maintenance of basal intracellular Ca(2+) levels in specialized cells of cerebellar circuit and vestibular and cochlear systems. Uses ATP as an energy source to transport cytosolic Ca(2+) ions across the plasma membrane to the extracellular compartment. Has fast activation and Ca(2+) clearance rate suited to control fast neuronal Ca(2+) dynamics. At parallel fiber to Purkinje neuron synapse, mediates presynaptic Ca(2+) efflux in response to climbing fiber-induced Ca(2+) rise. Provides for fast return of Ca(2+) concentrations back to their resting levels, ultimately contributing to long-term depression induction and motor learning. Plays an essential role in hearing and balance. In cochlear hair cells, shuttles Ca(2+) ions from stereocilia to the endolymph and dissipates Ca(2+) transients generated by the opening of the mechanoelectrical transduction channels. Regulates Ca(2+) levels in the vestibular system, where it contributes to the formation of otoconia. In non-excitable cells, regulates Ca(2+) signaling through spatial control of Ca(2+) ions extrusion and dissipation of Ca(2+) transients generated by store-operated channels. In lactating mammary gland, allows for the high content of Ca(2+) ions in the milk. The chain is Plasma membrane calcium-transporting ATPase 2 (Atp2b2) from Rattus norvegicus (Rat).